Consider the following 172-residue polypeptide: Type IV secretion system putative outer membrane lipoprotein BAB2_0057 (172 aa).

The first 15 residues, 1–15, serve as a signal peptide directing secretion; the sequence is MRTLVMVACAVSLAA. C16 carries N-palmitoyl cysteine lipidation. C16 carries the S-diacylglycerol cysteine lipid modification. The OmpA-like domain occupies 58–172; sequence WPARPPKQTV…RRVDIEILRK (115 aa).

Its subcellular location is the cell outer membrane. Functionally, the virB operon is essential for intracellular survival and is not involved in the invasion process. Constitutes a major determinant of virulence in mice. This protein is essential for pathogenesis in mice but is not required for intracellular survival. This is Type IV secretion system putative outer membrane lipoprotein BAB2_0057 from Brucella abortus (strain 2308).